Reading from the N-terminus, the 200-residue chain is Holliday junction resolvase RecU (200 aa).

A disordered region spans residues 1–24 (MTIRYPNGKRYDQASQPHKTPIKK). Mg(2+) is bound by residues Thr85, Asp87, Glu100, and Gln119.

The protein belongs to the RecU family. It depends on Mg(2+) as a cofactor.

It is found in the cytoplasm. It catalyses the reaction Endonucleolytic cleavage at a junction such as a reciprocal single-stranded crossover between two homologous DNA duplexes (Holliday junction).. Functionally, endonuclease that resolves Holliday junction intermediates in genetic recombination. Cleaves mobile four-strand junctions by introducing symmetrical nicks in paired strands. Promotes annealing of linear ssDNA with homologous dsDNA. Required for DNA repair, homologous recombination and chromosome segregation. This Bacillus mycoides (strain KBAB4) (Bacillus weihenstephanensis) protein is Holliday junction resolvase RecU.